The sequence spans 127 residues: UPF0716 protein YtzA (127 aa).

4 consecutive transmembrane segments (helical) span residues 3-22, 26-46, 70-90, and 93-115; these read FLFL…FLFL, IGIL…AAAA, AIAD…PGFL, and LAGA…FKWL.

It belongs to the UPF0716 (FxsA) family.

The protein localises to the cell membrane. The protein is UPF0716 protein YtzA (ytzA) of Bacillus subtilis (strain 168).